Consider the following 235-residue polypeptide: uncharacterized protein (235 aa).

A helical membrane pass occupies residues 27–47 (AMKLWSTWITLLILTFFCSEC). The CX domain maps to 124-185 (YFWGESKYVP…CCGYDCCSNS (62 aa)). The chain crosses the membrane as a helical span at residues 187-207 (IFTSIFSLLVILLIVSVLSIF).

Its subcellular location is the membrane. This is an uncharacterized protein from Caenorhabditis elegans.